An 87-amino-acid chain; its full sequence is Small ribosomal subunit protein bS21m (87 aa).

Belongs to the bacterial ribosomal protein bS21 family. In terms of assembly, component of the mitochondrial ribosome small subunit (28S) which comprises a 12S rRNA and about 30 distinct proteins.

It localises to the mitochondrion. This Mus musculus (Mouse) protein is Small ribosomal subunit protein bS21m (Mrps21).